Here is a 535-residue protein sequence, read N- to C-terminus: uncharacterized protein (535 aa).

2 helical membrane-spanning segments follow: residues 7–27 (DFDV…AYLA) and 509–529 (GGAV…ACLA).

The protein localises to the cell membrane. This is an uncharacterized protein from Mycobacterium bovis (strain ATCC BAA-935 / AF2122/97).